Here is a 160-residue protein sequence, read N- to C-terminus: uncharacterized protein (160 aa).

A run of 4 helical transmembrane segments spans residues 7–27 (IFLK…CIFL), 48–68 (LVFI…YQAF), 95–115 (AVTI…MAEI), and 121–141 (IIVI…FAAV).

The protein localises to the cell membrane. This is an uncharacterized protein from Bacillus subtilis (strain 168).